The sequence spans 344 residues: Phosphoribosylformylglycinamidine cyclo-ligase (344 aa).

Belongs to the AIR synthase family.

It is found in the cytoplasm. It carries out the reaction 2-formamido-N(1)-(5-O-phospho-beta-D-ribosyl)acetamidine + ATP = 5-amino-1-(5-phospho-beta-D-ribosyl)imidazole + ADP + phosphate + H(+). It functions in the pathway purine metabolism; IMP biosynthesis via de novo pathway; 5-amino-1-(5-phospho-D-ribosyl)imidazole from N(2)-formyl-N(1)-(5-phospho-D-ribosyl)glycinamide: step 2/2. This is Phosphoribosylformylglycinamidine cyclo-ligase from Haemophilus influenzae (strain PittGG).